We begin with the raw amino-acid sequence, 201 residues long: Recombination protein RecR (201 aa).

The C4-type zinc-finger motif lies at 58–73 (CGRCGALTDVDPCGIC). The region spanning 81-178 (ETLCLVSEWD…RVTRLAQGIP (98 aa)) is the Toprim domain.

This sequence belongs to the RecR family.

May play a role in DNA repair. It seems to be involved in an RecBC-independent recombinational process of DNA repair. It may act with RecF and RecO. The protein is Recombination protein RecR of Nitratidesulfovibrio vulgaris (strain DSM 19637 / Miyazaki F) (Desulfovibrio vulgaris).